The chain runs to 297 residues: N-acetylmuramic acid 6-phosphate etherase (297 aa).

One can recognise an SIS domain in the interval 55–218; sequence AAAALKSGGR…STGAMVKFGK (164 aa). Residue E83 is the Proton donor of the active site. E114 is a catalytic residue.

This sequence belongs to the GCKR-like family. MurNAc-6-P etherase subfamily. Homodimer.

It carries out the reaction N-acetyl-D-muramate 6-phosphate + H2O = N-acetyl-D-glucosamine 6-phosphate + (R)-lactate. Its pathway is amino-sugar metabolism; 1,6-anhydro-N-acetylmuramate degradation. It functions in the pathway amino-sugar metabolism; N-acetylmuramate degradation. It participates in cell wall biogenesis; peptidoglycan recycling. In terms of biological role, specifically catalyzes the cleavage of the D-lactyl ether substituent of MurNAc 6-phosphate, producing GlcNAc 6-phosphate and D-lactate. Together with AnmK, is also required for the utilization of anhydro-N-acetylmuramic acid (anhMurNAc) either imported from the medium or derived from its own cell wall murein, and thus plays a role in cell wall recycling. The protein is N-acetylmuramic acid 6-phosphate etherase of Salmonella paratyphi A (strain ATCC 9150 / SARB42).